Here is a 206-residue protein sequence, read N- to C-terminus: tRNA(Phe) 7-((3-amino-3-carboxypropyl)-4-demethylwyosine(37)-N(4))-methyltransferase 2 (206 aa).

Belongs to the TYW3 family.

The catalysed reaction is 4-demethyl-7-[(3S)-3-amino-3-carboxypropyl]wyosine(37) in tRNA(Phe) + S-adenosyl-L-methionine = 7-[(3S)-3-amino-3-carboxypropyl]wyosine(37) in tRNA(Phe) + S-adenosyl-L-homocysteine + H(+). Its function is as follows. S-adenosyl-L-methionine-dependent methyltransferase that acts as a component of the wyosine derivatives biosynthesis pathway. Probably methylates N-4 position of wybutosine-86 to produce wybutosine-72. The protein is tRNA(Phe) 7-((3-amino-3-carboxypropyl)-4-demethylwyosine(37)-N(4))-methyltransferase 2 of Pyrococcus horikoshii (strain ATCC 700860 / DSM 12428 / JCM 9974 / NBRC 100139 / OT-3).